A 502-amino-acid polypeptide reads, in one-letter code: MQDRSDQFVLALDQGTTSTRAILFGRKGDIHGVAQQEITQHYPQPGWVEHDAEEIWQAQLAVARAALRDNGILAKQIVAVGMTNQRETTVLWDRSSGEPLHRAIVWQDRRTAGLCDELTTAGHAGLFRERTGLVLDAYFSGTKLKWLLDHIPGARSRAERGELAFGTIDSWLTWKLSGGRAHVTDPSNASRTLLFDIHRCCWDEELLALLDIPMALLPRIVDSSGEIATIAAEWLGAEIPLSGIAGDQQAATFGQVCLQHGMAKNTYGTGCFLLMNTGQAPMASCHRLLTTIGWQRQGKTTYLLEGSVFMGGATVQWLRDGLGLISSADQIESLAASVADNGGVYLVPAHTGLGAPYWDPFARGALFGMTRGTTRAHIARAALEAIAFQSADVLQAMEKDAGQSLSELRVDGGAARNDLLMQFQADLLGVPVVRPQVTETTALGAAYLAGLAVGFWQDEAELTALWRADRRFEPSMAEDRRSALFADWHRAVERSLHWANAT.

Position 16 (Thr-16) interacts with ADP. Residues Thr-16, Thr-17, and Ser-18 each contribute to the ATP site. Thr-16 serves as a coordination point for sn-glycerol 3-phosphate. ADP is bound at residue Arg-20. Positions 86, 87, 138, and 247 each coordinate sn-glycerol 3-phosphate. The glycerol site is built by Arg-86, Glu-87, Tyr-138, Asp-247, and Gln-248. ADP-binding residues include Thr-269 and Gly-312. 4 residues coordinate ATP: Thr-269, Gly-312, Gln-316, and Gly-413. ADP-binding residues include Gly-413 and Asn-417.

It belongs to the FGGY kinase family.

It carries out the reaction glycerol + ATP = sn-glycerol 3-phosphate + ADP + H(+). The protein operates within polyol metabolism; glycerol degradation via glycerol kinase pathway; sn-glycerol 3-phosphate from glycerol: step 1/1. Inhibited by fructose 1,6-bisphosphate (FBP). Key enzyme in the regulation of glycerol uptake and metabolism. Catalyzes the phosphorylation of glycerol to yield sn-glycerol 3-phosphate. The protein is Glycerol kinase of Dechloromonas aromatica (strain RCB).